The sequence spans 303 residues: UPF0282 protein MM_2966 (303 aa).

This sequence belongs to the UPF0282 family.

The polypeptide is UPF0282 protein MM_2966 (Methanosarcina mazei (strain ATCC BAA-159 / DSM 3647 / Goe1 / Go1 / JCM 11833 / OCM 88) (Methanosarcina frisia)).